A 106-amino-acid chain; its full sequence is CRISPR-associated endoribonuclease Cas2 (106 aa).

Aspartate 8 serves as a coordination point for Mg(2+). The segment at 86–106 (EEAAEAAVSYPGRSRKKARAG) is disordered.

Belongs to the CRISPR-associated endoribonuclease Cas2 protein family. Homodimer, forms a heterotetramer with a Cas1 homodimer. Mg(2+) serves as cofactor.

Functionally, CRISPR (clustered regularly interspaced short palindromic repeat), is an adaptive immune system that provides protection against mobile genetic elements (viruses, transposable elements and conjugative plasmids). CRISPR clusters contain sequences complementary to antecedent mobile elements and target invading nucleic acids. CRISPR clusters are transcribed and processed into CRISPR RNA (crRNA). Functions as a ssRNA-specific endoribonuclease. Involved in the integration of spacer DNA into the CRISPR cassette. The protein is CRISPR-associated endoribonuclease Cas2 of Desulforudis audaxviator (strain MP104C).